The sequence spans 495 residues: Lysine--tRNA ligase (495 aa).

2 residues coordinate Mg(2+): Glu406 and Glu413.

It belongs to the class-II aminoacyl-tRNA synthetase family. As to quaternary structure, homodimer. The cofactor is Mg(2+).

The protein resides in the cytoplasm. It carries out the reaction tRNA(Lys) + L-lysine + ATP = L-lysyl-tRNA(Lys) + AMP + diphosphate. This Leuconostoc mesenteroides subsp. mesenteroides (strain ATCC 8293 / DSM 20343 / BCRC 11652 / CCM 1803 / JCM 6124 / NCDO 523 / NBRC 100496 / NCIMB 8023 / NCTC 12954 / NRRL B-1118 / 37Y) protein is Lysine--tRNA ligase.